We begin with the raw amino-acid sequence, 319 residues long: Pre T-cell antigen receptor alpha (319 aa).

Positions 1 to 16 (MAESWLLLLLALGCPA) are cleaved as a signal peptide. Over 17 to 160 (LPTEVTTLLR…LRGTRALVLR (144 aa)) the chain is Extracellular. Cys-58 and Cys-118 form a disulfide bridge. An N-linked (GlcNAc...) asparagine glycan is attached at Asn-78. A helical membrane pass occupies residues 161–181 (LGALRLLLFKLLLLDVLLTCG). Residues 182–319 (RLHAPPAARG…PPADPSFPGG (138 aa)) lie on the Cytoplasmic side of the membrane. Residues 189-207 (ARGDPAGASGPGAPSLPAP) show a composition bias toward low complexity. The interval 189 to 293 (ARGDPAGASG…VLRAWSSGPS (105 aa)) is disordered. The segment covering 260–271 (RRRRVHTRRPRR) has biased composition (basic residues).

As to quaternary structure, heterodimer with TCRB; disulfide linked. This heterodimer assembles with CD3 proteins into a signaling-competent pre-T-cell receptor complex. Interacts with RHBDD1.

Its subcellular location is the membrane. The protein resides in the cell membrane. Its function is as follows. Component of the pre-T-cell receptor complex (composed of PTCRA, TCRB and the CD3 complex) that has a crucial role in early T-cell development, particularly alpha-beta T cell differentiation. This is Pre T-cell antigen receptor alpha (PTCRA) from Bos taurus (Bovine).